Consider the following 358-residue polypeptide: Magnesium-protoporphyrin IX monomethyl ester [oxidative] cyclase (358 aa).

This sequence belongs to the AcsF family. Fe cation serves as cofactor.

It carries out the reaction Mg-protoporphyrin IX 13-monomethyl ester + 3 NADPH + 3 O2 + 2 H(+) = 3,8-divinyl protochlorophyllide a + 3 NADP(+) + 5 H2O. Its pathway is porphyrin-containing compound metabolism; chlorophyll biosynthesis (light-independent). In terms of biological role, catalyzes the formation of the isocyclic ring in chlorophyll biosynthesis. Mediates the cyclase reaction, which results in the formation of divinylprotochlorophyllide (Pchlide) characteristic of all chlorophylls from magnesium-protoporphyrin IX 13-monomethyl ester (MgPMME). This is Magnesium-protoporphyrin IX monomethyl ester [oxidative] cyclase from Synechococcus elongatus (strain ATCC 33912 / PCC 7942 / FACHB-805) (Anacystis nidulans R2).